The chain runs to 169 residues: Prolyl-tRNA synthetase associated domain-containing protein 1 (169 aa).

Belongs to the PRORSD1 family.

This chain is Prolyl-tRNA synthetase associated domain-containing protein 1 (Prorsd1), found in Mus musculus (Mouse).